Reading from the N-terminus, the 483-residue chain is UDP-N-acetylmuramyl-tripeptide synthetase (483 aa).

Position 43 (serine 43) interacts with UDP-N-acetyl-alpha-D-muramoyl-L-alanyl-D-glutamate. Residue 116–122 (GTKGKTT) participates in ATP binding. UDP-N-acetyl-alpha-D-muramoyl-L-alanyl-D-glutamate contacts are provided by residues 160-161 (TT), serine 187, and arginine 195. Lysine 229 bears the N6-carboxylysine mark.

This sequence belongs to the MurCDEF family. MurE subfamily. In terms of processing, carboxylation is probably crucial for Mg(2+) binding and, consequently, for the gamma-phosphate positioning of ATP.

It is found in the cytoplasm. The protein operates within cell wall biogenesis; peptidoglycan biosynthesis. In terms of biological role, catalyzes the addition of an amino acid to the nucleotide precursor UDP-N-acetylmuramoyl-L-alanyl-D-glutamate (UMAG) in the biosynthesis of bacterial cell-wall peptidoglycan. This chain is UDP-N-acetylmuramyl-tripeptide synthetase, found in Lactococcus lactis subsp. cremoris (strain MG1363).